The primary structure comprises 641 residues: MAVPTGSANLFLRPLILAVLSFLLLSSFVSSVEWLDIDSSDLKALQVIETELGVNSQRSSASDVNPCGRRGVFCERRHSATTGEYVLRVTRLVYRSRSLTGTISPVIGMLSELKELTLSNNQLVNAVPVDILSCKQLEVLDLRKNRFSGQIPGNFSSLSRLRILDLSSNKLSGNLNFLKNLRNLENLSVANNLFSGKIPEQIVSFHNLRFFDFSGNRYLEGPAPVMSSIKLQTSPHQTRHILAETPTSSPTNKPNNSTTSKAPKGAPKPGKLKKKKKKSKKKKVAAWILGFVVGAIGGTISGFVFSVLFKLIIQAIRGSEKPPGPSIFSPLIKKAEDLAFLENEEALASLEIIGRGGCGEVFKAELPGSNGKIIAVKKVIQPPKDADELTDEDSKFLNKKMRQIRSEINTVGHIRHRNLLPLLAHVSRPECHYLVYEYMEKGSLQDILTDVQAGNQELMWPARHKIALGIAAGLEYLHMDHNPRIIHRDLKPANVLLDDDMEARISDFGLAKAMPDAVTHITTSHVAGTVGYIAPEFYQTHKFTDKCDIYSFGVILGILVIGKLPSDEFFQHTDEMSLIKWMRNIITSENPSLAIDPKLMDQGFDEQMLLVLKIACYCTLDDPKQRPNSKDVRTMLSQIKH.

The first 31 residues, 1-31 (MAVPTGSANLFLRPLILAVLSFLLLSSFVSS), serve as a signal peptide directing secretion. The Extracellular segment spans residues 32 to 284 (VEWLDIDSSD…KKKKSKKKKV (253 aa)). 5 LRR repeats span residues 112-133 (ELKE…DILS), 136-159 (QLEV…SSLS), 160-182 (RLRI…KNLR), 183-205 (NLEN…IVSF), and 207-228 (NLRF…VMSS). An N-linked (GlcNAc...) asparagine glycan is attached at N154. N-linked (GlcNAc...) asparagine glycosylation is present at N186. The disordered stretch occupies residues 243 to 278 (AETPTSSPTNKPNNSTTSKAPKGAPKPGKLKKKKKK). Polar residues predominate over residues 245–259 (TPTSSPTNKPNNSTT). An N-linked (GlcNAc...) asparagine glycan is attached at N256. Residues 260–269 (SKAPKGAPKP) show a composition bias toward low complexity. The helical transmembrane segment at 285 to 305 (AAWILGFVVGAIGGTISGFVF) threads the bilayer. Topologically, residues 306–641 (SVLFKLIIQA…VRTMLSQIKH (336 aa)) are cytoplasmic. The region spanning 347 to 641 (LASLEIIGRG…VRTMLSQIKH (295 aa)) is the Protein kinase domain. ATP-binding positions include 353 to 361 (IGRGGCGEV) and K377. D489 (proton acceptor) is an active-site residue.

This sequence belongs to the protein kinase superfamily. Ser/Thr protein kinase family. In terms of assembly, interacts with CST. Interacts with RLP23. Component of a trimeric complex composed of RLP23, SOBIR1 and BAK1. BAK1 is recruited into a pre-formed RLP23-SOBIR1 complex in a ligand-dependent manner. In terms of processing, autophosphorylated on Ser, Thr and Tyr residues. As to expression, mostly present in leaves and flowers, with increasing expression in older flowers.

Its subcellular location is the cell membrane. It carries out the reaction L-seryl-[protein] + ATP = O-phospho-L-seryl-[protein] + ADP + H(+). It catalyses the reaction L-threonyl-[protein] + ATP = O-phospho-L-threonyl-[protein] + ADP + H(+). The catalysed reaction is L-tyrosyl-[protein] + ATP = O-phospho-L-tyrosyl-[protein] + ADP + H(+). Dual specificity kinase acting on both serine/threonine- and tyrosine-containing substrates. Acting as a counterplayer of BIR1, promotes the activation of plant defense and cell death. Component of the RLP23-SOBIR1-BAK1 complex that mediates NLP-triggered immunity. Functions as an inhibitor/regulator of abscission, probably by regulating membrane trafficking during abscission. The sequence is that of Leucine-rich repeat receptor-like serine/threonine/tyrosine-protein kinase SOBIR1 (SOBIR1) from Arabidopsis thaliana (Mouse-ear cress).